The sequence spans 247 residues: ATP synthase subunit a, chloroplastic (247 aa).

5 helical membrane passes run 38–58 (QVLITSWVVIAILLGSATLAV), 95–115 (VPFIGTMFLFIFVSNWSGALL), 134–154 (INTTVALALLTSVAYFYAGLT), 199–219 (LVVVVLVSLVPSIVPIPVMFL), and 220–240 (GLFTSGIQALIFATLAAAYIG).

The protein belongs to the ATPase A chain family. F-type ATPases have 2 components, CF(1) - the catalytic core - and CF(0) - the membrane proton channel. CF(1) has five subunits: alpha(3), beta(3), gamma(1), delta(1), epsilon(1). CF(0) has four main subunits: a, b, b' and c.

The protein resides in the plastid. Its subcellular location is the chloroplast thylakoid membrane. Key component of the proton channel; it plays a direct role in the translocation of protons across the membrane. This Vitis vinifera (Grape) protein is ATP synthase subunit a, chloroplastic.